Consider the following 28-residue polypeptide: leu operon leader peptide (28 aa).

Involved in control of the biosynthesis of leucine. This is leu operon leader peptide (leuL) from Shigella flexneri.